The following is a 1366-amino-acid chain: DNA-directed RNA polymerase subunit beta (1366 aa).

The protein belongs to the RNA polymerase beta chain family. As to quaternary structure, the RNAP catalytic core consists of 2 alpha, 1 beta, 1 beta' and 1 omega subunit. When a sigma factor is associated with the core the holoenzyme is formed, which can initiate transcription.

It catalyses the reaction RNA(n) + a ribonucleoside 5'-triphosphate = RNA(n+1) + diphosphate. DNA-dependent RNA polymerase catalyzes the transcription of DNA into RNA using the four ribonucleoside triphosphates as substrates. This chain is DNA-directed RNA polymerase subunit beta, found in Marinomonas sp. (strain MWYL1).